The following is an 80-amino-acid chain: Conotoxin Lt6.2 (80 aa).

Residues 1-24 form the signal peptide; sequence MKLTRVLIIAVLFLTAYQLTTVET. The propeptide occupies 25–47; that stretch reads YSRGKWMHRALRSTGKNPKVTRE. 3 disulfide bridges follow: cysteine 48–cysteine 62, cysteine 55–cysteine 66, and cysteine 61–cysteine 73.

The protein belongs to the conotoxin O1 superfamily. As to expression, expressed by the venom duct.

It is found in the secreted. In Conus litteratus (Lettered cone), this protein is Conotoxin Lt6.2.